Here is a 219-residue protein sequence, read N- to C-terminus: Large ribosomal subunit protein uL1 (219 aa).

The protein belongs to the universal ribosomal protein uL1 family. As to quaternary structure, component of the large ribosomal subunit.

It is found in the cytoplasm. The polypeptide is Large ribosomal subunit protein uL1 (RPL1) (Encephalitozoon cuniculi (strain GB-M1) (Microsporidian parasite)).